The following is a 21-amino-acid chain: Pollen allergen Ole e 7 (21 aa).

The protein is Pollen allergen Ole e 7 of Olea europaea (Common olive).